Here is a 113-residue protein sequence, read N- to C-terminus: Endoribonuclease SymE (113 aa).

The region spanning Gly-29–Pro-74 is the SpoVT-AbrB domain.

This sequence belongs to the SymE family.

The protein localises to the cytoplasm. Involved in the degradation and recycling of damaged RNA. It is itself a target for degradation by the ATP-dependent protease Lon. The polypeptide is Endoribonuclease SymE (Escherichia coli O7:K1 (strain IAI39 / ExPEC)).